Here is a 705-residue protein sequence, read N- to C-terminus: Dynein axonemal intermediate chain 1 (705 aa).

Disordered stretches follow at residues 1-44 (MPSK…AVRP) and 122-169 (AGSQ…DVPA). S124 and S127 each carry phosphoserine. Polar residues predominate over residues 124-135 (SQESVKVVTSDT). The segment covering 136-159 (EILEEEEEPKEGEGEGEGEAEGEA) has biased composition (acidic residues). WD repeat units lie at residues 386-426 (SSES…SQPC), 435-478 (KHTD…LVHI), 543-583 (AHNM…PMFI), 585-625 (DLNA…YEAI), and 633-672 (KKKNKITHVQFNPIHPIIIVGDDRGHITCLKLSPNLRKMP).

This sequence belongs to the dynein intermediate chain family. As to quaternary structure, consists of at least two heavy chains and a number of intermediate and light chains. Interacts with BICD2. Interacts with CFAP45 and CFAP52. Interacts with CFAP53.

The protein localises to the cytoplasm. The protein resides in the cytoskeleton. It is found in the cilium axoneme. Functionally, part of the dynein complex of respiratory cilia. This Rattus norvegicus (Rat) protein is Dynein axonemal intermediate chain 1 (Dnai1).